The chain runs to 290 residues: Probable aquaporin PIP2-1 (290 aa).

2 consecutive transmembrane segments (helical) span residues 43 to 63 (AVIAEFIATLLFLYITVATVI) and 80 to 100 (CGGVGVLGIAWAFGGMIFILV). The NPA 1 motif lies at 112–114 (NPA). Helical transmembrane passes span 131-151 (ILYIVAQCLGAICGVGLVKAF), 173-193 (GTGLAAEIIGTFVLVYTVFSA), and 207-227 (VLAPLPIGFAVFMVHLATIPI). The NPA 2 signature appears at 233–235 (NPA). The chain crosses the membrane as a helical span at residues 255–275 (IFWVGPFVGAAIAAFYHQYIL).

It belongs to the MIP/aquaporin (TC 1.A.8) family. PIP (TC 1.A.8.11) subfamily. As to expression, expressed in roots, leaves and anthers.

It localises to the cell membrane. Aquaporins facilitate the transport of water and small neutral solutes across cell membranes. This chain is Probable aquaporin PIP2-1 (PIP2-1), found in Oryza sativa subsp. japonica (Rice).